The primary structure comprises 348 residues: N-formyl peptide receptor 2 (348 aa).

N-linked (GlcNAc...) asparagine glycosylation is present at Asn1. Over 1–24 the chain is Extracellular; it reads NFSTPLNEHEEVSYESAGYTVLQI. Residues 25–47 form a helical membrane-spanning segment; the sequence is LPLVVLGVTFVLGVLGNGLVIWV. Topologically, residues 48–58 are cytoplasmic; that stretch reads AGFRMTRTVTT. A helical transmembrane segment spans residues 59-80; the sequence is ICYLNLPLADFSFTATLPFLIV. Residues 81 to 97 are Extracellular-facing; sequence SMAMGEKWPFGWFLCKL. The cysteines at positions 95 and 173 are disulfide-linked. Residues 98–118 traverse the membrane as a helical segment; it reads IHIVVDINLFGSVFLIGFIAL. The Cytoplasmic portion of the chain corresponds to 119–137; sequence DRCICVLHPVWAQNHRTVS. Residues 138–159 form a helical membrane-spanning segment; the sequence is LAMKVIIGPWILALVLTLPVFL. The Extracellular portion of the chain corresponds to 160 to 202; sequence FLTTVTIPNGDTYCTFNFASWGGTPEERKNVAITMLTARGIIR. A helical membrane pass occupies residues 203–223; it reads FVIGFSMPMSIVAICYGLIAA. Over 224-239 the chain is Cytoplasmic; it reads KIHKKGMIKSSRPLRV. Residues 240–263 traverse the membrane as a helical segment; that stretch reads LTAVVASFFICWFPFQLVALLSTV. Over 264 to 283 the chain is Extracellular; it reads WLKEMLFYGKYKIINILVNP. Residues 284-303 traverse the membrane as a helical segment; it reads TSSLAFFNSCLNPMLYVFVG. Residues 304-348 lie on the Cytoplasmic side of the membrane; sequence QDFRERLIRSLPTSLERALSEDSAPTNDTAAKCASPPAETELQAM. Residues 323-348 are disordered; sequence SEDSAPTNDTAAKCASPPAETELQAM.

This sequence belongs to the G-protein coupled receptor 1 family. As to quaternary structure, interacts with APP; the interaction takes place at the cell surface and the complex is then rapidly internalized.

The protein resides in the cell membrane. Functionally, low affinity receptor for N-formyl-methionyl peptides, which are powerful neutrophil chemotactic factors. Binding of FMLP to the receptor causes activation of neutrophils. This response is mediated via a G-protein that activates a phosphatidylinositol-calcium second messenger system. Receptor for the chemokine-like protein FAM19A5, mediating FAM19A5-stimulated macrophage chemotaxis and the inhibitory effect on TNFSF11/RANKL-induced osteoclast differentiation. The chain is N-formyl peptide receptor 2 (FPR2) from Pongo pygmaeus (Bornean orangutan).